The sequence spans 213 residues: V-type proton ATPase subunit c'' (213 aa).

The Vacuolar portion of the chain corresponds to 1-14 (MNKESKDDDMSLGK). The helical transmembrane segment at 15–35 (FSFSHFLYYLVLIVVIVYGLY) threads the bilayer. Over 36-61 (KLFTGHGSDINFGKFLLRTSPYMWAN) the chain is Cytoplasmic. The helical transmembrane segment at 62-82 (LGIALCVGLSVVGAAWGIFIT) threads the bilayer. Residues 83 to 100 (GSSMIGAGVRAPRITTKN) lie on the Vacuolar side of the membrane. A helical transmembrane segment spans residues 101 to 121 (LISIIFCEVVAIYGLIIAIVF). Residues 122–144 (SSKLTVATAENMYSKSNLYTGYS) lie on the Cytoplasmic side of the membrane. Residues 145 to 165 (LFWAGITVGASNLICGIAVGI) traverse the membrane as a helical segment. The Vacuolar portion of the chain corresponds to 166 to 183 (TGATAAISDAADSALFVK). Residues 184-204 (ILVIEIFGSILGLLGLIVGLL) form a helical membrane-spanning segment. Residues 205–213 (MAGKASEFQ) are Cytoplasmic-facing.

The protein belongs to the V-ATPase proteolipid subunit family. V-ATPase is a heteromultimeric enzyme composed of a peripheral catalytic V1 complex (components A to H) attached to an integral membrane V0 proton pore complex (components: a, c, c', c'', d, e, f and VOA1). The decameric c-ring forms the proton-conducting pore, and is composed of eight proteolipid subunits c, one subunit c' and one subunit c''.

It is found in the vacuole membrane. Its function is as follows. Proton-conducting pore forming subunit of the V0 complex of vacuolar(H+)-ATPase (V-ATPase), a multisubunit enzyme composed of a peripheral complex (V1) that hydrolyzes ATP and a membrane integral complex (V0) that translocates protons. V-ATPase is responsible for acidifying and maintaining the pH of intracellular compartments. This chain is V-type proton ATPase subunit c'' (VMA16), found in Saccharomyces cerevisiae (strain ATCC 204508 / S288c) (Baker's yeast).